We begin with the raw amino-acid sequence, 151 residues long: MYPAHLLVLLAVCVSLLGAASIPARPLNLYQFGNMIQCANHGRRPTRHYMDYGCYCGKGGSGTPVDELDRCCQTHDDCYGEAEKLPACNYMMSGPYYNTYSYECNDGELTCKDNNDECKAFICNCDRTAAICFARAPYNDANWNIDTKTRC.

The first 27 residues, 1-27, serve as a signal peptide directing secretion; sequence MYPAHLLVLLAVCVSLLGAASIPARPL. 7 disulfides stabilise this stretch: Cys38–Cys104, Cys54–Cys151, Cys56–Cys72, Cys71–Cys132, Cys78–Cys125, Cys88–Cys118, and Cys111–Cys123. Residues Tyr55, Gly57, and Gly59 each contribute to the Ca(2+) site. His75 is a catalytic residue. Ca(2+) is bound at residue Asp76. The active site involves Asp126.

This sequence belongs to the phospholipase A2 family. Group I subfamily. D49 sub-subfamily. Ca(2+) is required as a cofactor. In terms of tissue distribution, expressed by the venom gland.

It localises to the secreted. It carries out the reaction a 1,2-diacyl-sn-glycero-3-phosphocholine + H2O = a 1-acyl-sn-glycero-3-phosphocholine + a fatty acid + H(+). Its function is as follows. PLA2 catalyzes the calcium-dependent hydrolysis of the 2-acyl groups in 3-sn-phosphoglycerides. The chain is Acidic phospholipase A2 2 from Tropidechis carinatus (Australian rough-scaled snake).